The following is a 460-amino-acid chain: C4-dicarboxylate transport protein (460 aa).

9 helical membrane passes run 20–40 (SLYF…HFYP), 56–76 (LIKM…IAGM), 88–108 (YALL…LIVV), 153–173 (IVGA…VIFG), 200–220 (IINM…AFTI), 234–254 (LMIC…GAIC), 301–321 (VVGL…SIYL), 342–362 (ITLL…TGSG), and 364–384 (IVLA…LALI). A disordered region spans residues 438 to 460 (PEDDLGVAEGPTPANAVNTTKTV).

The protein belongs to the dicarboxylate/amino acid:cation symporter (DAACS) (TC 2.A.23) family.

It is found in the cell inner membrane. In terms of biological role, responsible for the transport of dicarboxylates such as succinate, fumarate, and malate from the periplasm across the membrane. The sequence is that of C4-dicarboxylate transport protein from Pseudomonas savastanoi pv. phaseolicola (strain 1448A / Race 6) (Pseudomonas syringae pv. phaseolicola (strain 1448A / Race 6)).